We begin with the raw amino-acid sequence, 197 residues long: Class A basic helix-loop-helix protein 15 (197 aa).

Residues 1–12 (MKTKNRPPRRRT) are compositionally biased toward basic residues. Disordered stretches follow at residues 1-82 (MKTK…ERER) and 175-197 (TEDQ…REGS). Thr-12 and Thr-25 each carry phosphothreonine. Over residues 27-36 (DRSQSGSGAS) the composition is skewed to polar residues. The span at 65–82 (SRRENSVQRRLESNERER) shows a compositional bias: basic and acidic residues. Residues 72–124 (QRRLESNERERQRMHKLNNAFQALREVIPHVRADKKLSKIETLTLAKNYIKSL) form the bHLH domain.

In terms of assembly, forms homodimers or heterodimers with TCF3 gene products E12 and E47. These dimers bind to the E-box site, however, heterodimer with MYOD1 does not bind target DNA. In terms of tissue distribution, expressed in liver, spleen and olfactory epithelium. Weaker expression is seen in skeletal muscle, cardiac muscle, eye and brain tissue.

The protein localises to the nucleus. Its function is as follows. Plays a role in controlling the transcriptional activity of MyoD, ensuring that expanding myoblast populations remain undifferentiated. Repression may occur through muscle-specific E-box occupancy by homodimers. May also negatively regulate bHLH-mediated transcription through an N-terminal repressor domain. Serves as a key regulator of acinar cell function, stability, and identity. Also required for normal organelle localization in exocrine cells and for mitochondrial calcium ion transport. May function as a unique regulator of gene expression in several different embryonic and postnatal cell lineages. Binds to the E-box consensus sequence 5'-CANNTG-3'. The polypeptide is Class A basic helix-loop-helix protein 15 (Bhlha15) (Rattus norvegicus (Rat)).